The sequence spans 346 residues: Histidinol-phosphate aminotransferase (346 aa).

Lys209 bears the N6-(pyridoxal phosphate)lysine mark.

The protein belongs to the class-II pyridoxal-phosphate-dependent aminotransferase family. Histidinol-phosphate aminotransferase subfamily. Homodimer. It depends on pyridoxal 5'-phosphate as a cofactor.

The enzyme catalyses L-histidinol phosphate + 2-oxoglutarate = 3-(imidazol-4-yl)-2-oxopropyl phosphate + L-glutamate. Its pathway is amino-acid biosynthesis; L-histidine biosynthesis; L-histidine from 5-phospho-alpha-D-ribose 1-diphosphate: step 7/9. This is Histidinol-phosphate aminotransferase from Aliivibrio fischeri (strain MJ11) (Vibrio fischeri).